A 118-amino-acid chain; its full sequence is Basic phospholipase A2 PA-11 (118 aa).

Intrachain disulfides connect cysteine 11–cysteine 71, cysteine 27–cysteine 117, cysteine 29–cysteine 45, cysteine 44–cysteine 98, cysteine 51–cysteine 91, cysteine 60–cysteine 84, and cysteine 78–cysteine 89. Residues tyrosine 28, glycine 30, and glycine 32 each coordinate Ca(2+). Residue histidine 48 is part of the active site. Aspartate 49 is a binding site for Ca(2+). Residue aspartate 92 is part of the active site.

It belongs to the phospholipase A2 family. Group I subfamily. D49 sub-subfamily. Requires Ca(2+) as cofactor. As to expression, expressed by the venom gland.

It localises to the secreted. It catalyses the reaction a 1,2-diacyl-sn-glycero-3-phosphocholine + H2O = a 1-acyl-sn-glycero-3-phosphocholine + a fatty acid + H(+). Functionally, PLA2 catalyzes the calcium-dependent hydrolysis of the 2-acyl groups in 3-sn-phosphoglycerides. The protein is Basic phospholipase A2 PA-11 of Pseudechis australis (Mulga snake).